The primary structure comprises 107 residues: MPRKRLTGIVVSDKMDKTVVVAVEKLVQHTIYKKYVKRTKKYHAHDERNECKIGDVVEIEETRPLSKTKRWRVVRIIQRFEPERVLKEEEDIQEEIEAVEGKGGVES.

Belongs to the universal ribosomal protein uS17 family. Part of the 30S ribosomal subunit.

Functionally, one of the primary rRNA binding proteins, it binds specifically to the 5'-end of 16S ribosomal RNA. The polypeptide is Small ribosomal subunit protein uS17 (Thermotoga sp. (strain RQ2)).